A 373-amino-acid polypeptide reads, in one-letter code: Chaperone protein DnaJ (373 aa).

Residues 4-68 (NYYQILGVSK…QTRAAYDRLG (65 aa)) form the J domain. The CR-type zinc-finger motif lies at 136 to 214 (GIEKNISFSS…CHGMGRYHKQ (79 aa)). The Zn(2+) site is built by cysteine 149, cysteine 152, cysteine 166, cysteine 169, cysteine 188, cysteine 191, cysteine 202, and cysteine 205. CXXCXGXG motif repeat units lie at residues 149–156 (CDTCHGSG), 166–173 (CDACSGVG), 188–195 (CHKCQGNG), and 202–209 (CKKCHGMG).

It belongs to the DnaJ family. As to quaternary structure, homodimer. Requires Zn(2+) as cofactor.

The protein localises to the cytoplasm. In terms of biological role, participates actively in the response to hyperosmotic and heat shock by preventing the aggregation of stress-denatured proteins and by disaggregating proteins, also in an autonomous, DnaK-independent fashion. Unfolded proteins bind initially to DnaJ; upon interaction with the DnaJ-bound protein, DnaK hydrolyzes its bound ATP, resulting in the formation of a stable complex. GrpE releases ADP from DnaK; ATP binding to DnaK triggers the release of the substrate protein, thus completing the reaction cycle. Several rounds of ATP-dependent interactions between DnaJ, DnaK and GrpE are required for fully efficient folding. Also involved, together with DnaK and GrpE, in the DNA replication of plasmids through activation of initiation proteins. The polypeptide is Chaperone protein DnaJ (Rickettsia peacockii (strain Rustic)).